We begin with the raw amino-acid sequence, 405 residues long: Dematin (405 aa).

Disordered stretches follow at residues 1–29 (MERLQKQPLTSPGSVSSSRDSSVPGSPSS), 81–100 (SRECSLSPKSTSPPPSPEVW), and 108–332 (IISQ…DRGN). Residues 11–29 (SPGSVSSSRDSSVPGSPSS) show a composition bias toward low complexity. S16, S18, S26, S92, S96, S110, and S113 each carry phosphoserine. Residues 113-124 (STPRTTGTPRTS) show a composition bias toward low complexity. The residue at position 114 (T114) is a Phosphothreonine. S156 and S226 each carry phosphoserine. The span at 216–228 (EEEEEEEDDDSEE) shows a compositional bias: acidic residues. Positions 224-308 (DDSEEEIKAI…SRLQSTEFSP (85 aa)) are interaction with RASGRF2. Basic and acidic residues-rich tracts occupy residues 229-242 (EIKAIRERQKEELS) and 252-261 (ILKEEMEKSL). Phosphoserine is present on residues S269, S279, S289, S303, S315, S333, S372, and S383. Residues 277–292 (HTSLHSGTSKSSSLPS) are compositionally biased toward low complexity. The segment covering 294–322 (GRTTLSRLQSTEFSPSGSEAGSPGLQNGE) has biased composition (polar residues). Residues 337–405 (VLEQKIYPYE…NELKKKASLF (69 aa)) enclose the HP domain. S403 carries the post-translational modification Phosphoserine; by PKA.

Belongs to the villin/gelsolin family. Monomeric (isoform 2); under reducing conditions. Self-associates. Exists under oxidizing condition as a trimer of two isoforms 2 and isoform 1 linked by disulfide bonds. Found in a complex with DMTN, F-actin and spectrin. Found in a complex with ADD2, DMTN and SLC2A1. Interacts with F-actin, ITPKB and spectrin. Isoform 2 interacts with SLC2A1 (via C-terminus cytoplasmic region). Interacts with RASGRF2. Phosphorylated. Phosphorylation at Ser-403 by PKA causes the C-terminal headpiece domain to associate with the N-terminal core domain, and leads to the inhibition of its actin bundling activity. Expressed in platelets. Isoform 1 and isoform 2 are expressed in mature erythrocytes (at protein level).

The protein resides in the cytoplasm. Its subcellular location is the cytosol. It localises to the perinuclear region. It is found in the cytoskeleton. The protein localises to the cell membrane. The protein resides in the membrane. Its subcellular location is the endomembrane system. It localises to the cell projection. Membrane-cytoskeleton-associated protein with F-actin-binding activity that induces F-actin bundles formation and stabilization. Its F-actin-bundling activity is reversibly regulated upon its phosphorylation by the cAMP-dependent protein kinase A (PKA). Binds to the erythrocyte membrane glucose transporter-1 SLC2A1/GLUT1, and hence stabilizes and attaches the spectrin-actin network to the erythrocytic plasma membrane. Plays a role in maintaining the functional integrity of PKA-activated erythrocyte shape and the membrane mechanical properties. Also plays a role as a modulator of actin dynamics in fibroblasts; acts as a negative regulator of the RhoA activation pathway. In platelets, functions as a regulator of internal calcium mobilization across the dense tubular system that affects platelet granule secretion pathways and aggregation. Also required for the formation of a diverse set of cell protrusions, such as filopodia and lamellipodia, necessary for platelet cell spreading, motility and migration. Acts as a tumor suppressor and inhibits malignant cell transformation. This chain is Dematin (Dmtn), found in Mus musculus (Mouse).